The sequence spans 132 residues: Small ribosomal subunit protein uS8 (132 aa).

Belongs to the universal ribosomal protein uS8 family. In terms of assembly, part of the 30S ribosomal subunit. Contacts proteins S5 and S12.

Functionally, one of the primary rRNA binding proteins, it binds directly to 16S rRNA central domain where it helps coordinate assembly of the platform of the 30S subunit. This chain is Small ribosomal subunit protein uS8, found in Geobacter sulfurreducens (strain ATCC 51573 / DSM 12127 / PCA).